An 863-amino-acid polypeptide reads, in one-letter code: Ubiquitin carboxyl-terminal hydrolase 13 (863 aa).

S114 is subject to Phosphoserine; by AURKB. The residue at position 122 (T122) is a Phosphothreonine. The segment at 187–295 (PVSKYANNLT…KHLAHFGIDM (109 aa)) adopts a UBP-type; degenerate zinc-finger fold. Residues C211, C214, C231, and H244 each coordinate Zn(2+). K311 participates in a covalent cross-link: Glycyl lysine isopeptide (Lys-Gly) (interchain with G-Cter in SUMO2). The region spanning 336 to 861 (TGLKNLGNSC…LGYMYFYRRI (526 aa)) is the USP domain. Catalysis depends on C345, which acts as the Nucleophile. K405 is covalently cross-linked (Glycyl lysine isopeptide (Lys-Gly) (interchain with G-Cter in SUMO2)). 2 consecutive UBA domains span residues 652 to 693 (DIDE…IIVH) and 727 to 767 (QPPE…IFSH). The active-site Proton acceptor is H823.

This sequence belongs to the peptidase C19 family. Interacts with UFD1. Interacts (via UBA domains) with SIAH2 (when ubiquitinated). Interacts with BAG6; the interaction is direct and may mediate UBL4A deubiquitination. Interacts (via UBA 2 domain) with AMFR; the interaction is direct. Interacts with UBL4A; may be indirect via BAG6. Interacts with NEDD4. In terms of processing, phosphorylated by AURKB at Ser-114; leading to stabilization of cell cycle proteins such as SKP2 and AURKB, but not MCL1. Highly expressed in ovary and testes.

Its subcellular location is the cytoplasm. The enzyme catalyses Thiol-dependent hydrolysis of ester, thioester, amide, peptide and isopeptide bonds formed by the C-terminal Gly of ubiquitin (a 76-residue protein attached to proteins as an intracellular targeting signal).. Specifically inhibited by spautin-1 (specific and potent autophagy inhibitor-1), a derivative of MBCQ that binds to USP13 and inhibits deubiquitinase activity. Regulated by PIK3C3/VPS34-containing complexes. The weak deubiquitinase activity in vitro suggests the existence of some mechanism that activates the enzyme. Deubiquitinase that mediates deubiquitination of target proteins such as BECN1, MITF, SKP2 and USP10 and is involved in various processes such as autophagy, endoplasmic reticulum-associated degradation (ERAD), cell cycle progression or DNA damage response. Component of a regulatory loop that controls autophagy and p53/TP53 levels: mediates deubiquitination of BECN1, a key regulator of autophagy, leading to stabilize the PIK3C3/VPS34-containing complexes. Alternatively, forms with NEDD4 a deubiquitination complex, which subsequently stabilizes VPS34 to promote autophagy. Also deubiquitinates USP10, an essential regulator of p53/TP53 stability. In turn, PIK3C3/VPS34-containing complexes regulate USP13 stability, suggesting the existence of a regulatory system by which PIK3C3/VPS34-containing complexes regulate p53/TP53 protein levels via USP10 and USP13. Recruited by nuclear UFD1 and mediates deubiquitination of SKP2, thereby regulating endoplasmic reticulum-associated degradation (ERAD). Also regulates ERAD through the deubiquitination of UBL4A a component of the BAG6/BAT3 complex. Mediates stabilization of SIAH2 independently of deubiquitinase activity: binds ubiquitinated SIAH2 and acts by impairing SIAH2 autoubiquitination. Regulates the cell cycle progression by stabilizing cell cycle proteins such as SKP2 and AURKB. In addition, plays an important role in maintaining genomic stability and in DNA replication checkpoint activation via regulation of RAP80 and TOPBP1. Deubiquitinates the multifunctional protein HMGB1 and subsequently drives its nucleocytoplasmic localization and its secretion. Positively regulates type I and type II interferon signalings by deubiquitinating STAT1 but negatively regulates antiviral response by deubiquitinating STING1. This is Ubiquitin carboxyl-terminal hydrolase 13 (USP13) from Homo sapiens (Human).